Here is a 689-residue protein sequence, read N- to C-terminus: Glycine--tRNA ligase beta subunit (689 aa).

This sequence belongs to the class-II aminoacyl-tRNA synthetase family. As to quaternary structure, tetramer of two alpha and two beta subunits.

It localises to the cytoplasm. It catalyses the reaction tRNA(Gly) + glycine + ATP = glycyl-tRNA(Gly) + AMP + diphosphate. The chain is Glycine--tRNA ligase beta subunit from Pectobacterium atrosepticum (strain SCRI 1043 / ATCC BAA-672) (Erwinia carotovora subsp. atroseptica).